A 127-amino-acid polypeptide reads, in one-letter code: Glycine cleavage system H protein 1 (127 aa).

The Lipoyl-binding domain occupies 20-101 (LLTVGITAYA…LGEAWFFRFR (82 aa)). Lysine 60 carries the post-translational modification N6-lipoyllysine.

It belongs to the GcvH family. The glycine cleavage system is composed of four proteins: P, T, L and H. (R)-lipoate serves as cofactor.

In terms of biological role, the glycine cleavage system catalyzes the degradation of glycine. The H protein shuttles the methylamine group of glycine from the P protein to the T protein. The sequence is that of Glycine cleavage system H protein 1 from Pseudomonas aeruginosa (strain ATCC 15692 / DSM 22644 / CIP 104116 / JCM 14847 / LMG 12228 / 1C / PRS 101 / PAO1).